The following is a 74-amino-acid chain: uncharacterized protein (74 aa).

Residues 29 to 63 adopt a coiled-coil conformation; it reads LNSKKSALQKDKELQQQAKAQESALAGEELRRRAL.

This is an uncharacterized protein from Pseudoalteromonas phage PM2 (Bacteriophage PM2).